Here is a 502-residue protein sequence, read N- to C-terminus: Pyruvate kinase (502 aa).

Residue R54 participates in substrate binding. K(+)-binding residues include N56, S58, D88, and T89. 56-59 is an ATP binding site; it reads NFSH. ATP-binding residues include R95 and K184. Residue E252 participates in Mg(2+) binding. Residues G275, D276, and T308 each contribute to the substrate site. Mg(2+) is bound at residue D276.

The protein belongs to the pyruvate kinase family. As to quaternary structure, homotetramer. Requires Mg(2+) as cofactor. The cofactor is K(+).

The enzyme catalyses pyruvate + ATP = phosphoenolpyruvate + ADP + H(+). Its pathway is carbohydrate degradation; glycolysis; pyruvate from D-glyceraldehyde 3-phosphate: step 5/5. Regulated by phosphoenolpyruvate substrate and is allosterically activated by ribose-5-phosphate, AMP and other nucleoside monophosphates but not by fructose-1,6-bisphosphate. The sequence is that of Pyruvate kinase (pyk) from Lactococcus lactis subsp. lactis (strain IL1403) (Streptococcus lactis).